The primary structure comprises 451 residues: tRNA modification GTPase MnmE (451 aa).

Residues Arg-25, Glu-82, and Lys-121 each contribute to the (6S)-5-formyl-5,6,7,8-tetrahydrofolate site. Positions 217–374 (GMSVVILGRP…LKQHLKTEMG (158 aa)) constitute a TrmE-type G domain. Residue Asn-227 coordinates K(+). GTP contacts are provided by residues 227–232 (NAGKSS), 246–252 (TDIAGTT), and 271–274 (DTAG). Residue Ser-231 coordinates Mg(2+). The K(+) site is built by Thr-246, Ile-248, and Thr-251. Thr-252 contacts Mg(2+). Residue Lys-451 coordinates (6S)-5-formyl-5,6,7,8-tetrahydrofolate.

It belongs to the TRAFAC class TrmE-Era-EngA-EngB-Septin-like GTPase superfamily. TrmE GTPase family. As to quaternary structure, homodimer. Heterotetramer of two MnmE and two MnmG subunits. Requires K(+) as cofactor.

The protein localises to the cytoplasm. Functionally, exhibits a very high intrinsic GTPase hydrolysis rate. Involved in the addition of a carboxymethylaminomethyl (cmnm) group at the wobble position (U34) of certain tRNAs, forming tRNA-cmnm(5)s(2)U34. This is tRNA modification GTPase MnmE from Hydrogenovibrio crunogenus (strain DSM 25203 / XCL-2) (Thiomicrospira crunogena).